The sequence spans 319 residues: Ferrochelatase (319 aa).

Residues His193 and Glu274 each coordinate Fe cation.

Belongs to the ferrochelatase family.

Its subcellular location is the cytoplasm. It catalyses the reaction heme b + 2 H(+) = protoporphyrin IX + Fe(2+). It functions in the pathway porphyrin-containing compound metabolism; protoheme biosynthesis; protoheme from protoporphyrin-IX: step 1/1. In terms of biological role, catalyzes the ferrous insertion into protoporphyrin IX. This is Ferrochelatase from Actinobacillus pleuropneumoniae serotype 3 (strain JL03).